Consider the following 256-residue polypeptide: Thiazole synthase (256 aa).

Lysine 95 serves as the catalytic Schiff-base intermediate with DXP. 1-deoxy-D-xylulose 5-phosphate-binding positions include glycine 156, 182–183, and 204–205; these read AG and NT.

It belongs to the ThiG family. In terms of assembly, homotetramer. Forms heterodimers with either ThiH or ThiS.

It localises to the cytoplasm. The enzyme catalyses [ThiS sulfur-carrier protein]-C-terminal-Gly-aminoethanethioate + 2-iminoacetate + 1-deoxy-D-xylulose 5-phosphate = [ThiS sulfur-carrier protein]-C-terminal Gly-Gly + 2-[(2R,5Z)-2-carboxy-4-methylthiazol-5(2H)-ylidene]ethyl phosphate + 2 H2O + H(+). It participates in cofactor biosynthesis; thiamine diphosphate biosynthesis. Catalyzes the rearrangement of 1-deoxy-D-xylulose 5-phosphate (DXP) to produce the thiazole phosphate moiety of thiamine. Sulfur is provided by the thiocarboxylate moiety of the carrier protein ThiS. In vitro, sulfur can be provided by H(2)S. In Escherichia coli (strain K12 / MC4100 / BW2952), this protein is Thiazole synthase.